The chain runs to 357 residues: Hemolysin VllY (357 aa).

VOC domains lie at glycine 12–arginine 132 and glutamate 162–glutamine 313. Residues histidine 165, histidine 243, and glutamate 322 each coordinate Fe cation.

This sequence belongs to the 4HPPD family. Requires Fe cation as cofactor.

In Vibrio vulnificus (strain CMCP6), this protein is Hemolysin VllY (vllY).